A 92-amino-acid chain; its full sequence is Large ribosomal subunit protein bL25 (92 aa).

It belongs to the bacterial ribosomal protein bL25 family. In terms of assembly, part of the 50S ribosomal subunit; part of the 5S rRNA/L5/L18/L25 subcomplex. Contacts the 5S rRNA. Binds to the 5S rRNA independently of L5 and L18.

Its function is as follows. This is one of the proteins that binds to the 5S RNA in the ribosome where it forms part of the central protuberance. The protein is Large ribosomal subunit protein bL25 of Photobacterium profundum (strain SS9).